A 696-amino-acid polypeptide reads, in one-letter code: UvrABC system protein B (696 aa).

Positions 46 to 433 constitute a Helicase ATP-binding domain; that stretch reads EGVEDGLSFQ…SGQTAEQVVR (388 aa). 59-66 lines the ATP pocket; sequence GVTGSGKT. A Beta-hairpin motif is present at residues 112–135; that stretch reads YYDYYQPEAYVPQRDLFIEKDSSI. The 167-residue stretch at 450–616 folds into the Helicase C-terminal domain; the sequence is QVDDVLSEIT…GVVKRIKDII (167 aa). The region spanning 647-682 is the UVR domain; that stretch reads AKEIKRLEKQMADYAKNLEFEKAAQTRDQLALLRER.

The protein belongs to the UvrB family. In terms of assembly, forms a heterotetramer with UvrA during the search for lesions. Interacts with UvrC in an incision complex.

It is found in the cytoplasm. Functionally, the UvrABC repair system catalyzes the recognition and processing of DNA lesions. A damage recognition complex composed of 2 UvrA and 2 UvrB subunits scans DNA for abnormalities. Upon binding of the UvrA(2)B(2) complex to a putative damaged site, the DNA wraps around one UvrB monomer. DNA wrap is dependent on ATP binding by UvrB and probably causes local melting of the DNA helix, facilitating insertion of UvrB beta-hairpin between the DNA strands. Then UvrB probes one DNA strand for the presence of a lesion. If a lesion is found the UvrA subunits dissociate and the UvrB-DNA preincision complex is formed. This complex is subsequently bound by UvrC and the second UvrB is released. If no lesion is found, the DNA wraps around the other UvrB subunit that will check the other stand for damage. The protein is UvrABC system protein B of Burkholderia mallei (strain ATCC 23344).